A 432-amino-acid chain; its full sequence is Glutamate-1-semialdehyde 2,1-aminomutase (432 aa).

Position 272 is an N6-(pyridoxal phosphate)lysine (K272).

Belongs to the class-III pyridoxal-phosphate-dependent aminotransferase family. HemL subfamily. Homodimer. Pyridoxal 5'-phosphate serves as cofactor.

It is found in the cytoplasm. The catalysed reaction is (S)-4-amino-5-oxopentanoate = 5-aminolevulinate. Its pathway is porphyrin-containing compound metabolism; protoporphyrin-IX biosynthesis; 5-aminolevulinate from L-glutamyl-tRNA(Glu): step 2/2. It participates in porphyrin-containing compound metabolism; chlorophyll biosynthesis. This chain is Glutamate-1-semialdehyde 2,1-aminomutase, found in Acaryochloris marina (strain MBIC 11017).